The following is a 130-amino-acid chain: Probable 4-amino-4-deoxy-L-arabinose-phosphoundecaprenol flippase subunit ArnF (130 aa).

At 1 to 4 (MGYG) the chain is on the cytoplasmic side. A helical membrane pass occupies residues 5–25 (WALFSVALVSAAQLLLKWVMM). At 26–44 (HLPPLGALRLWLDPAYAEP) the chain is on the periplasmic side. A helical transmembrane segment spans residues 45–65 (LALLMGGLLAYVCSMGCWFMA). At 66-74 (LRRLPLNKA) the chain is on the cytoplasmic side. A helical transmembrane segment spans residues 75-95 (YPLLSLSYVLVAACALMIPEF). Residues 96-103 (NERFTFSR) are Periplasmic-facing. A helical transmembrane segment spans residues 104 to 124 (LMGVALICGGLLLICLPAGGK). Residues 125–130 (GDTPRR) lie on the Cytoplasmic side of the membrane.

This sequence belongs to the ArnF family. In terms of assembly, heterodimer of ArnE and ArnF.

The protein resides in the cell inner membrane. It participates in bacterial outer membrane biogenesis; lipopolysaccharide biosynthesis. Functionally, translocates 4-amino-4-deoxy-L-arabinose-phosphoundecaprenol (alpha-L-Ara4N-phosphoundecaprenol) from the cytoplasmic to the periplasmic side of the inner membrane. This chain is Probable 4-amino-4-deoxy-L-arabinose-phosphoundecaprenol flippase subunit ArnF, found in Sodalis glossinidius (strain morsitans).